The following is a 336-amino-acid chain: Gibberellin 2-beta-dioxygenase 7 (336 aa).

The 101-residue stretch at 191–291 folds into the Fe2OG dioxygenase domain; that stretch reads LENSFLRLNK…RMSIAFFVCP (101 aa). Residues histidine 216, aspartate 218, and histidine 272 each coordinate Fe cation. Residue arginine 282 is part of the active site. Arginine 282 is a 2-oxoglutarate binding site.

Belongs to the iron/ascorbate-dependent oxidoreductase family. GA2OX subfamily. Requires Fe(2+) as cofactor.

The catalysed reaction is gibberellin A1 + 2-oxoglutarate + O2 = gibberellin A8 + succinate + CO2. The protein operates within plant hormone biosynthesis; gibberellin biosynthesis. In terms of biological role, catalyzes the 2-beta-hydroxylation of gibberellins (GA) precursors, rendering them unable to be converted to active GAs. Hydroxylates the C20-GA GA12 and GA53, but is not active on C19-GAs, like GA1, GA4, GA9 and GA20. The polypeptide is Gibberellin 2-beta-dioxygenase 7 (GA2OX7) (Arabidopsis thaliana (Mouse-ear cress)).